A 798-amino-acid chain; its full sequence is Transferrin receptor protein 2 (798 aa).

Topologically, residues 1–81 (MEQRWGLLRR…WAAAGRKAAP (81 aa)) are cytoplasmic. Residues 23-26 (YRRV) carry the Endocytosis signal motif. A helical; Signal-anchor for type II membrane protein membrane pass occupies residues 82-102 (YLVLITLLIFTGAFLLGYVAF). Residues 103–798 (RGSCQACGDS…GDVWNIDNNF (696 aa)) lie on the Extracellular side of the membrane. Residues asparagine 235, asparagine 334, and asparagine 535 are each glycosylated (N-linked (GlcNAc...) asparagine).

It belongs to the peptidase M28 family. M28B subfamily. As to expression, predominantly expressed in liver. Also expressed in kidney, spleen, brain, lung, heart and muscle with very low expression in kidney, muscle and heart.

The protein localises to the cell membrane. Its subcellular location is the cytoplasm. Functionally, mediates cellular uptake of transferrin-bound iron in a non-iron dependent manner. May be involved in iron metabolism, hepatocyte function and erythrocyte differentiation. This chain is Transferrin receptor protein 2 (Tfr2), found in Mus musculus (Mouse).